The chain runs to 211 residues: Large ribosomal subunit protein uL3 (211 aa).

Gln-150 carries the post-translational modification N5-methylglutamine.

It belongs to the universal ribosomal protein uL3 family. As to quaternary structure, part of the 50S ribosomal subunit. Forms a cluster with proteins L14 and L19. Methylated by PrmB.

In terms of biological role, one of the primary rRNA binding proteins, it binds directly near the 3'-end of the 23S rRNA, where it nucleates assembly of the 50S subunit. This Pseudomonas fluorescens (strain ATCC BAA-477 / NRRL B-23932 / Pf-5) protein is Large ribosomal subunit protein uL3.